The primary structure comprises 85 residues: Progonadoliberin-2 (85 aa).

A signal peptide spans 1 to 23 (MCASRLVLLLGLLLCVGAHLSSG). Glutamine 24 is subject to Pyrrolidone carboxylic acid. Glycine 33 bears the Glycine amide mark.

Belongs to the GnRH family. In terms of tissue distribution, midbrain tegmentum.

It is found in the secreted. Its function is as follows. Stimulates the secretion of gonadotropins. This chain is Progonadoliberin-2 (gnrh2), found in Verasper moseri (Barfin flounder).